The following is a 931-amino-acid chain: Protein phosphatase 1 regulatory subunit 37 homolog (931 aa).

Residues 20–71 are disordered; it reads TAASSPASPIPPTSPSMFATPPHQQSHSSATSVRKKVCQEANSSADDPDSDA. Over residues 41–51 the composition is skewed to polar residues; it reads PHQQSHSSATS. 8 LRR repeats span residues 232-259, 262-285, 290-314, 323-346, 351-374, 379-407, 409-430, and 435-458; these read AISL…LARA, SASL…VLIC, NTGI…IYQL, LLDL…LRNR, KSAL…SLAE, NTKI…LVSN, HLHR…ILAE, and NTAL…ALHS. The span at 519–533 shows a compositional bias: basic and acidic residues; the sequence is QDHVSEDTEKENKDA. Disordered regions lie at residues 519 to 602 and 780 to 807; these read QDHV…RHQR and PDCT…IRQR. A compositionally biased stretch (acidic residues) spans 534–547; it reads DNDDKEPENEDGDT. Residues 554 to 563 are compositionally biased toward low complexity; the sequence is SDASADQSDS. Basic and acidic residues-rich tracts occupy residues 564 to 584 and 790 to 807; these read PADK…EKRP and TTSR…IRQR.

Belongs to the PPP1R37 family.

This Caenorhabditis briggsae protein is Protein phosphatase 1 regulatory subunit 37 homolog.